Here is a 317-residue protein sequence, read N- to C-terminus: Glutathione synthetase (317 aa).

The ATP-grasp domain maps to 126 to 311; the sequence is KFFATQFTQC…IGDKLMDAIA (186 aa). An ATP-binding site is contributed by 152–208; that stretch reads AAEHRDIILKPLDGMGGSSIFRHREGDPNLSVILETLTQHGSQQIMAQRYLPEIKDG. Residues E282 and N284 each contribute to the Mg(2+) site.

The protein belongs to the prokaryotic GSH synthase family. Mg(2+) serves as cofactor. Requires Mn(2+) as cofactor.

The catalysed reaction is gamma-L-glutamyl-L-cysteine + glycine + ATP = glutathione + ADP + phosphate + H(+). The protein operates within sulfur metabolism; glutathione biosynthesis; glutathione from L-cysteine and L-glutamate: step 2/2. The sequence is that of Glutathione synthetase from Pseudomonas aeruginosa (strain ATCC 15692 / DSM 22644 / CIP 104116 / JCM 14847 / LMG 12228 / 1C / PRS 101 / PAO1).